A 236-amino-acid polypeptide reads, in one-letter code: 2-C-methyl-D-erythritol 4-phosphate cytidylyltransferase (236 aa).

This sequence belongs to the IspD/TarI cytidylyltransferase family. IspD subfamily. Homodimer.

The catalysed reaction is 2-C-methyl-D-erythritol 4-phosphate + CTP + H(+) = 4-CDP-2-C-methyl-D-erythritol + diphosphate. The protein operates within isoprenoid biosynthesis; isopentenyl diphosphate biosynthesis via DXP pathway; isopentenyl diphosphate from 1-deoxy-D-xylulose 5-phosphate: step 2/6. Its function is as follows. Catalyzes the formation of 4-diphosphocytidyl-2-C-methyl-D-erythritol from CTP and 2-C-methyl-D-erythritol 4-phosphate (MEP). The polypeptide is 2-C-methyl-D-erythritol 4-phosphate cytidylyltransferase (Salmonella schwarzengrund (strain CVM19633)).